The following is a 240-amino-acid chain: MNKNVVIKSLATLTILTSVTGIGTTLVEEVQQTAKAENNVTKIQDTNIFPYTGVVAFKSATGFVVGKNTILTNKHVSKNYKVGDRITAHPNSDKGNGGIYSIKKIINYPGKEDVSVIQVEERAIERGPKGFNFNDNVTPFKYAAGAKAGERIKVIGYPHPYKNKYVLYESTGPVMSVEGSSIVYSAHTESGNSGSPVLNSNNELVGIHFASDVKNDDNRNAYGVYFTPEIKKFIAENIDK.

Positions 1–36 are cleaved as a signal peptide; it reads MNKNVVIKSLATLTILTSVTGIGTTLVEEVQQTAKA. Catalysis depends on charge relay system residues histidine 75, aspartate 113, and serine 193.

Belongs to the peptidase S1B family.

It localises to the secreted. In terms of biological role, serine protease that cleaves specifically after the sequence Trp-Glu-Leu-Gln. The chain is Serine protease SplB (splB) from Staphylococcus aureus (strain Mu3 / ATCC 700698).